Here is a 368-residue protein sequence, read N- to C-terminus: 1-deoxy-D-xylulose 5-phosphate reductoisomerase (368 aa).

8 residues coordinate NADPH: threonine 7, glycine 8, serine 9, isoleucine 10, glycine 31, lysine 32, asparagine 33, and asparagine 113. A 1-deoxy-D-xylulose 5-phosphate-binding site is contributed by lysine 114. Residue glutamate 115 coordinates NADPH. Aspartate 133 is a binding site for Mn(2+). 1-deoxy-D-xylulose 5-phosphate-binding residues include serine 134, glutamate 135, serine 158, and histidine 181. Glutamate 135 is a Mn(2+) binding site. Glycine 187 contributes to the NADPH binding site. 4 residues coordinate 1-deoxy-D-xylulose 5-phosphate: serine 194, asparagine 199, lysine 200, and glutamate 203. Glutamate 203 is a binding site for Mn(2+).

This sequence belongs to the DXR family. The cofactor is Mg(2+). Mn(2+) serves as cofactor.

The enzyme catalyses 2-C-methyl-D-erythritol 4-phosphate + NADP(+) = 1-deoxy-D-xylulose 5-phosphate + NADPH + H(+). Its pathway is isoprenoid biosynthesis; isopentenyl diphosphate biosynthesis via DXP pathway; isopentenyl diphosphate from 1-deoxy-D-xylulose 5-phosphate: step 1/6. Functionally, catalyzes the NADPH-dependent rearrangement and reduction of 1-deoxy-D-xylulose-5-phosphate (DXP) to 2-C-methyl-D-erythritol 4-phosphate (MEP). In Helicobacter pylori (strain P12), this protein is 1-deoxy-D-xylulose 5-phosphate reductoisomerase.